Consider the following 384-residue polypeptide: MAAAVVVAGEAAAAAAAAGAGGKKRGASRSWILFDAAGEERVLDADKYAIMHRVDINARDLRILDPLLSYPSTILGRERAIVLNLEHIKAIITAEEVLLRDPLDDNVIPVVEELRRRLAPSSATQHDVEGAEEDESPFEFRALEVTLEAICSFLGARTTELESAAYPALDELTSKISSRNLDRVRKLKSGMTRLNARVQKVRDELEQLLDDDDDMADLYLSRKLAGAASPVSGSGGPNWFPASPTIGSKISRASRASAPTIHGNENDVEELEMLLEAYFMQIDGTLNKLTTLREYIDDTEDYINIQLDNHRNQLIQLELFLSSGTVCLSLYSLVAGIFGMNIPYTWNDNHGYVFKWVVLVSGLFCAFMFVSIVAYARHKGLVGS.

2 helical membrane passes run 319-339 (LFLS…GIFG) and 356-376 (WVVL…VAYA). The short motif at 339–341 (GMN) is the Required for magnesium transport activity element.

This sequence belongs to the CorA metal ion transporter (MIT) (TC 1.A.35.5) family.

It is found in the membrane. In terms of biological role, magnesium transporter that may mediate the influx of magnesium. This is Magnesium transporter MRS2-I (MRS2-I) from Oryza sativa subsp. japonica (Rice).